The following is a 210-amino-acid chain: V-type sodium ATPase subunit D (210 aa).

It belongs to the V-ATPase D subunit family.

Its function is as follows. Involved in ATP-driven sodium extrusion. The chain is V-type sodium ATPase subunit D (ntpD) from Enterococcus hirae (strain ATCC 9790 / DSM 20160 / JCM 8729 / LMG 6399 / NBRC 3181 / NCIMB 6459 / NCDO 1258 / NCTC 12367 / WDCM 00089 / R).